A 102-amino-acid chain; its full sequence is uncharacterized protein (102 aa).

A run of 2 helical transmembrane segments spans residues 33-55 (VLEL…LVVL) and 57-79 (VVGV…VVVA).

It is found in the membrane. This is an uncharacterized protein from Saccharomyces cerevisiae (strain ATCC 204508 / S288c) (Baker's yeast).